The following is a 261-amino-acid chain: TM2 domain-containing protein 3 (261 aa).

A signal peptide spans 1 to 44 (MEAAAEPLRSVRHLSRVLLFLSQCYILSGDGSLNLEHSQPLAQA). At 45–193 (IKDPGPTRTF…RTFPKLLYCN (149 aa)) the chain is on the extracellular side. 6 N-linked (GlcNAc...) asparagine glycosylation sites follow: asparagine 101, asparagine 136, asparagine 154, asparagine 171, asparagine 183, and asparagine 193. A helical transmembrane segment spans residues 194–214 (WTGGYKWSTALALSITLGGFG). The TM2 domain occupies 197–244 (GYKWSTALALSITLGGFGADRFYLGQWREGLGKLFSFGGLGIWTLIDV). The Cytoplasmic portion of the chain corresponds to 215-229 (ADRFYLGQWREGLGK). A helical membrane pass occupies residues 230–250 (LFSFGGLGIWTLIDVLLIGVG). Topologically, residues 251–261 (YVGPADGSLYI) are extracellular.

The protein belongs to the TM2 family.

It is found in the membrane. The polypeptide is TM2 domain-containing protein 3 (Tm2d3) (Mus musculus (Mouse)).